A 317-amino-acid chain; its full sequence is MHVPVLLEEAADALNIRADGIYVDATFGRGGHSRLILSRLGESGRLIAFDKDPAAISAARSIRDERFQAVHGSYAQIRTALESLSVSRIDGILLDLGVSSIQLDEASRGFSFRHDGPLDMRMDSSRGKTAAEWLATVTETELKEVIRTYGEERYAGQIAGAIVMAQTRQPIVTTFQLAEIVAAVVRKFGHRDGRQHPATRTFQAIRIHLNQELEELSVTLPQCVELLNANGRLVVISFHSLEDRIVKRFMRMQAGTDTLPRKLPVRDEESRMHSRQTLQIIGKKIRPGENEVAANPRARSAVMRVAEKLETGSKVDR.

S-adenosyl-L-methionine-binding positions include 30 to 32 (GGH), Asp50, Tyr74, Asp95, and Gln102.

Belongs to the methyltransferase superfamily. RsmH family.

The protein resides in the cytoplasm. It catalyses the reaction cytidine(1402) in 16S rRNA + S-adenosyl-L-methionine = N(4)-methylcytidine(1402) in 16S rRNA + S-adenosyl-L-homocysteine + H(+). Specifically methylates the N4 position of cytidine in position 1402 (C1402) of 16S rRNA. This chain is Ribosomal RNA small subunit methyltransferase H, found in Nitrosomonas europaea (strain ATCC 19718 / CIP 103999 / KCTC 2705 / NBRC 14298).